A 272-amino-acid chain; its full sequence is Eukaryotic translation initiation factor 4E homolog (272 aa).

The tract at residues 249–272 is disordered; the sequence is GKLNSGRKPSNTRGGFSSFGNKRY. Residues 255-272 show a composition bias toward polar residues; it reads RKPSNTRGGFSSFGNKRY.

It belongs to the eukaryotic initiation factor 4E family.

In terms of biological role, recognizes and binds the 7-methylguanosine-containing mRNA cap during an early step in the initiation of protein synthesis and facilitates ribosome binding by inducing the unwinding of the mRNAs secondary structures. This Acanthamoeba polyphaga mimivirus (APMV) protein is Eukaryotic translation initiation factor 4E homolog.